The sequence spans 252 residues: 5'-nucleotidase SurE (252 aa).

A divalent metal cation contacts are provided by Asp-8, Asp-9, Ser-39, and Asn-91.

It belongs to the SurE nucleotidase family. It depends on a divalent metal cation as a cofactor.

It localises to the cytoplasm. The enzyme catalyses a ribonucleoside 5'-phosphate + H2O = a ribonucleoside + phosphate. In terms of biological role, nucleotidase that shows phosphatase activity on nucleoside 5'-monophosphates. The protein is 5'-nucleotidase SurE of Variovorax paradoxus (strain S110).